Reading from the N-terminus, the 269-residue chain is Signal recognition particle receptor subunit beta (269 aa).

The helical transmembrane segment at L35–I55 threads the bilayer. GTP is bound by residues G69 to L77 and T90 to S93. S110 carries the phosphoserine modification. GTP-binding positions include G118 and N178–D181. T212 is modified (phosphothreonine). GTP is bound at residue A246.

It belongs to the SRP receptor beta subunit family. In terms of assembly, heterodimer with SRPRA.

The protein localises to the endoplasmic reticulum membrane. Functionally, component of the SRP (signal recognition particle) receptor. Ensures, in conjunction with the signal recognition particle, the correct targeting of the nascent secretory proteins to the endoplasmic reticulum membrane system. May mediate the membrane association of SR. The polypeptide is Signal recognition particle receptor subunit beta (Srprb) (Mus musculus (Mouse)).